Consider the following 530-residue polypeptide: Glucose-6-phosphate isomerase (530 aa).

The active-site Proton donor is the glutamate 347. Catalysis depends on residues histidine 378 and lysine 493.

This sequence belongs to the GPI family.

It localises to the cytoplasm. The enzyme catalyses alpha-D-glucose 6-phosphate = beta-D-fructose 6-phosphate. It functions in the pathway carbohydrate biosynthesis; gluconeogenesis. The protein operates within carbohydrate degradation; glycolysis; D-glyceraldehyde 3-phosphate and glycerone phosphate from D-glucose: step 2/4. In terms of biological role, catalyzes the reversible isomerization of glucose-6-phosphate to fructose-6-phosphate. The protein is Glucose-6-phosphate isomerase of Chlamydia abortus (strain DSM 27085 / S26/3) (Chlamydophila abortus).